A 380-amino-acid polypeptide reads, in one-letter code: Chaperone protein DnaJ (380 aa).

Residues 4–68 (DFYSVLGVSR…EKRRMYDQMG (65 aa)) form the J domain. Basic and acidic residues predominate over residues 27 to 87 (KASEYHPDVS…RGATDTDRGR (61 aa)). A disordered region spans residues 27-126 (KASEYHPDVS…SRSGPRQGSD (100 aa)). The span at 88 to 100 (GGMGGMGGGGMGG) shows a compositional bias: gly residues. A compositionally biased stretch (low complexity) spans 115–124 (SQSRSGPRQG). The segment at 141–223 (GVTKQLTVTR…CRGDGQVRNE (83 aa)) adopts a CR-type zinc-finger fold. Residues Cys154, Cys157, Cys171, Cys174, Cys197, Cys200, Cys211, and Cys214 each contribute to the Zn(2+) site. CXXCXGXG motif repeat units lie at residues 154 to 161 (CPDCDGAG), 171 to 178 (CSACDGRG), 197 to 204 (CPQCDGKG), and 211 to 218 (CSTCRGDG).

This sequence belongs to the DnaJ family. Homodimer. Zn(2+) is required as a cofactor.

It is found in the cytoplasm. Its function is as follows. Participates actively in the response to hyperosmotic and heat shock by preventing the aggregation of stress-denatured proteins and by disaggregating proteins, also in an autonomous, DnaK-independent fashion. Unfolded proteins bind initially to DnaJ; upon interaction with the DnaJ-bound protein, DnaK hydrolyzes its bound ATP, resulting in the formation of a stable complex. GrpE releases ADP from DnaK; ATP binding to DnaK triggers the release of the substrate protein, thus completing the reaction cycle. Several rounds of ATP-dependent interactions between DnaJ, DnaK and GrpE are required for fully efficient folding. Also involved, together with DnaK and GrpE, in the DNA replication of plasmids through activation of initiation proteins. This chain is Chaperone protein DnaJ, found in Natronomonas pharaonis (strain ATCC 35678 / DSM 2160 / CIP 103997 / JCM 8858 / NBRC 14720 / NCIMB 2260 / Gabara) (Halobacterium pharaonis).